The chain runs to 97 residues: Large ribosomal subunit protein uL23 (97 aa).

Belongs to the universal ribosomal protein uL23 family. In terms of assembly, part of the 50S ribosomal subunit. Contacts protein L29, and trigger factor when it is bound to the ribosome.

One of the early assembly proteins it binds 23S rRNA. One of the proteins that surrounds the polypeptide exit tunnel on the outside of the ribosome. Forms the main docking site for trigger factor binding to the ribosome. This Myxococcus xanthus (strain DK1622) protein is Large ribosomal subunit protein uL23.